Reading from the N-terminus, the 280-residue chain is Type II restriction enzyme MboI (280 aa).

This sequence belongs to the DpnII type II restriction endonuclease family.

It catalyses the reaction Endonucleolytic cleavage of DNA to give specific double-stranded fragments with terminal 5'-phosphates.. A P subtype restriction enzyme that recognizes the double-stranded unmethylated sequence 5'-GATC-3' and cleaves before G-1. This is Type II restriction enzyme MboI (mboIR) from Moraxella bovis.